The following is a 492-amino-acid chain: Catalase isozyme 1 (492 aa).

Catalysis depends on residues His-65 and Asn-138. Tyr-348 lines the heme pocket.

This sequence belongs to the catalase family. As to quaternary structure, homotetramer. It depends on heme as a cofactor. In terms of tissue distribution, in whole endosperms (aleurones plus starchy endosperm), in isolated aleurones and in developing seeds.

Its subcellular location is the peroxisome. It is found in the glyoxysome. The enzyme catalyses 2 H2O2 = O2 + 2 H2O. Occurs in almost all aerobically respiring organisms and serves to protect cells from the toxic effects of hydrogen peroxide. The sequence is that of Catalase isozyme 1 (CAT1) from Hordeum vulgare (Barley).